A 196-amino-acid polypeptide reads, in one-letter code: Small ribosomal subunit protein uS4c (196 aa).

A disordered region spans residues 22–42 (TRKTPKSGSNPKKKFHSGKKE). Positions 89 to 169 (MRLDNILFRL…LPKHLTIDTL (81 aa)) constitute an S4 RNA-binding domain.

The protein belongs to the universal ribosomal protein uS4 family. Part of the 30S ribosomal subunit. Contacts protein S5. The interaction surface between S4 and S5 is involved in control of translational fidelity.

It localises to the plastid. The protein localises to the chloroplast. Functionally, one of the primary rRNA binding proteins, it binds directly to 16S rRNA where it nucleates assembly of the body of the 30S subunit. Its function is as follows. With S5 and S12 plays an important role in translational accuracy. In Melica altissima (Siberian melic grass), this protein is Small ribosomal subunit protein uS4c (rps4).